The chain runs to 7158 residues: MVGAPRFTQKPSIQQTPTGDLLMECHLEADPQPTIAWQHSGNLLEPSGRVVQTLTPLGGSLYKATLVIKEPNAGDGGAYKCTARNQLGESNANINLNFAGAGGDEAKSRGPSFVGKPRIIPKDGGALIVMECKVKSASTPVAKWMKDGVPLSMGGLYHAIFSDLGDQTYLCQLEIRGPSSSDAGQYRCNIRNDQGETNANLALNFEEPDPSERQERKRSTASPRPSSRGPGSRPSSPKKSMKSREGTPKRTLKPREGSPSKKLRSRTSTPVNEEVSQSESRRSSRTDKMEVDQVSGASKRKPDGLPPPGGDEKKLRAGSPSTRKSPSRKSASPTPSRKGSSAGGAASGTTGASASATSATSGGSASSDASRDKYTRPPIVLEASRSQTGRIGGSVVLEVQWQCHSSTIIEWYRDGTLVRNSSEYSQSFNGSIAKLQVNKLTEEKSGLYKCHAKCDYGEGQSSAMVKIEQSDVEEELMKHRKDAEDEYQKEEQKSQTLQAETKKRVARRSKSKSKSPAPQAKKSTTSESGRQEASEVEHKRSSSVRPDPDEESQLDEIPSSGLTIPEERRRELLGQVGESDDEVSESISELPSFAGGKPRRKTDSPPKQDDMFSRDTLLRKTTTSTKNESSTVEEKTKLRKTVKKVDGELDFKAMVKLKKVKKEEGGTTEKSGFPLDHADSTSSVLSQESRSRRGSNAPFAKDGLPEQPANPFAQLKKVKSGAGGLEKSDSMASLKKLDLKKGKIDDNSDGAFKVQLKKVVKKEVKESTISVKEKNGTESGIKTEFKMEKRERTTLQKYEKTDSDGSKKEDKPKKVSIAPVSTNKSSDDEPSTPRHHKEVEEKSTSEELKAKVAGRQVGQKRNGAQKPEEPKNLLSQIQLKKVTKKAHDDTNELEGIKLKKVTTVPKHVADDDSQSESESRRGSVFGELRRGSRAPRDSADNSRRDSIRRSSIDMRRESVQEILEKTSTPLVPSGASGSAPKIVEVPENVTVVENETAILTCKVSGSPAPTFRWFKGSREVISGGRFKHITDGKEHTVALALLKCRSQDEGPYTLTIENVHGTDSADVKLLVTSDNGLDFRAMLKHRESQAGFQKDGEGGGAGGGGGEKKPMTEAERRQSLFPGKKVEKWDIPLPEKTVQQQVDKICEWKCTYSRPNAKIRWYKDRKEIFSGGLKYKIVIEKNVCTLIINNPEVDDTGKYTCEANGVPTHAQLTVLEPPMKYSFLNPLPNTQEIYRTKQAVLTCKVNTPRAPLVWYRGSKAIQEGDPRFIIEKDAVGRCTLTIKEVEEDDQAEWTARITQDVFSKVQVYVEEPRHTFVVPMKSQKVNESDLATLETDVNDKDAEVVWWHDGKRIDIDGVKFKVESSNRKRRLIINGARIEDHGEYKCTTKDDRTMAQLIVDAKNKFIVALKDTEVIEKDDVTLMCQTKDTKTPGIWFRNGKQISSMPGGKFETQSRNGTHTLKIGKIEMNEADVYEIDQAGLRGSCNVTVLEAEKRPILNWKPKKIEAKAGEPCVVKVPFQIKGTRRGDPKAQILKNGKPIDEEMRKLVEVIIKDDVAEIVFKNPQLADTGKWALELGNSAGTALAPFELFVKDKPKPPKGPLETKNVTAEGLDLVWGTPDPDEGAPVKAYIIEMQEGRSGNWAKVGETKGTDFKVKDLKEHGEYKFRVKALNECGLSDPLTGESVLAKNPYGVPGKPKNMDAIDVDKDHCTLAWEPPEEDGGAPITGYIIERREKSEKDWHQVGQTKPDCCELTDKKVVEDKEYLYRVKAVNKAGPGDPCDHGKPIKMKAKKASPEFTGGGIKDLRLKVGETIKYDVPISGEPLPECLWVVNGKPLKAVGRVKMSSERGKHIMKIENAVRADSGKFTITLKNSSGSCDSTATVTVVGRPTPPKGPLDIADVCADGATLSWNPPDDDGGDPLTGYIVEAQDMDNKGKYIEVGKVDPNTTTLKVNGLRNKGNYKFRVKAVNNEGESEPLSADQYTQIKDPWDEPGKPGRPEITDFDADRIDIAWEPPHKDGGAPIEEYIVEVRDPDTKEWKEVKRVPDTNASISGLKEGKEYQFRVRAVNKAGPGQPSEPSEKQLAKPKFIPAWLKHDNLKSITVKAGATVRWEVKIGGEPIPEVKWFKGNQQLENGIQLTIDTRKNEHTILCIPSAMRSDVGEYRLTVKNSHGADEEKANLTVLDRPSKPNGPLEVSDVFEDNLNLSWKPPDDDGGEPIEYYEVEKLDTATGRWVPCAKVKDTKAHIDGLKKGQTYQFRVKAVNKEGASDALSTDKDTKAKNPYDEPGKTGTPDVVDWDADRVSLEWEPPKSDGGAPITQYVIEKKGKHGRDWQECGKVSGDQTNAEILGLKEGEEYQFRVKAVNKAGPGEASDPSRKVVAKPRNLKPWIDREAMKTITIKVGNDVEFDVPVRGEPPPKKEWIFNEKPVDDQKIRIESEDYKTRFVLRGATRKHAGLYTLTATNASGSDKHSVEVIVLGKPSSPLGPLEVSNVYEDRADLEWKVPEDDGGAPIDHYEIEKMDLATGRWVPCGRSETTKTTVPNLQPGHEYKFRVRAVNKEGESDPLTTNTAILAKNPYEVPGKVDKPELVDWDKDHVDLAWNAPDDGGAPIEAFVIEKKDKNGRWEEALVVPGDQKTATVPNLKEGEEYQFRISARNKAGTGDPSDPSDRVVAKPRNLAPRIHREDLSDTTVKVGATLKFIVHIDGEPAPDVTWSFNGKGIGESKAQIENEPYISRFALPKALRKQSGKYTITATNINGTDSVTINIKVKSKPTKPKGPIEVTDVFEDRATLDWKPPEDDGGEPIEFYEIEKMNTKDGIWVPCGRSGDTHFTVDSLNKGDHYKFRVKAVNSEGPSDPLETETDILAKNPFDRPDRPGRPEPTDWDSDHVDLKWDPPLSDGGAPIEEYQIEKRTKYGRWEPAITVPGGQTTATVPDLTPNEEYEFRVVAVNKGGPSDPSDASKAVIAKPRNLKPHIDRDALKNLTIKAGQSISFDVPVSGEPAPTVTWHWPDNREIRNGGRVKLDNPEYQSKLVVKQMERGDSGTFTIKAVNANGEDEATVKINVIDKPTSPNGPLDVSDVHGDHVTLNWRAPDDDGGIPIENYVIEKYDTASGRWVPAAKVAGDKTTAVVDGLIPGHEYKFRVAAVNAEGESDPLETFGTTLAKDPFDKPGKTNAPEITDWDKDHVDLEWKPPANDGGAPIEEYVVEMKDEFSPFWNDVAHVPAGQTNATVGNLKEGSKYEFRIRAKNKAGLGDPSDSASAVAKARNVPPVIDRNSIQEIKVKAGQDFSLNIPVSGEPTPTITWTFEGTPVESDDRMKLNNEDGKTKFHVKRALRSDTGTYIIKAENENGTDTAEVKVTVLDHPSSPRGPLDVTNIVKDGCDLAWKEPEDDGGAEISHYVIEKQDAATGRWTACGESKDTNFHVDDLTQGHEYKFRVKAVNRHGDSDPLEAREAIIAKDPFDRADKPGTPEIVDWDKDHADLKWTPPADDGGAPIEGYLVEMRTPSGDWVPAVTVGAGELTATVDGLKPGQTYQFRVKALNKAGESTPSDPSRTMVAKPRHLAPKINRDMFVAQRVKAGQTLNFDVNVEGEPAPKIEWFLNGSPLSSGGNTHIDNNTDNNTKLTTKSTARADSGKYKIVATNESGKDEHEVDVNILDIPGAPEGPLRHKDITKESVVLKWDEPLDDGGSPITNYVVEKQEDGGRWVPCGETSDTSLKVNKLSEGHEYKFRVKAVNRQGTSAPLTSDHAIVAKNPFDEPDAPTDVTPVDWDKDHVDLEWKPPANDGGAPIDAYIVEKKDKFGDWVECARVDGKTTKATADNLTPGETYQFRVKAVNKAGPGKPSDPTGNVVAKPRRMAPKLNLAGLLDLRIKAGTPIKLDIAFEGEPAPVAKWKANDATIDTGARADVTNTPTSSAIHIFSAVRGDTGVYKIIVENEHGKDTAQCNVTVLDVPGTPEGPLKIDEIHKEGCTLNWKPPTDNGGTDVLHYIVEKMDTSRGTWQEVGTFPDCTAKVNKLVPGKEYAFRVKAVNLQGESKPLEAEEPIIAKNQFDVPDPVDKPEVTDWDKDRIDIKWNPTANNGGAPVTGYIVEKKEKGSAIWTEAGKTPGTTFSADNLKPGVEYEFRVIAVNAAGPSDPSDPTDPQITKARYLKPKILTASRKIKIKAGFTHNLEVDFIGAPDPTATWTVGDSGAALAPELLVDAKSSTTSIFFPSAKRADSGNYKLKVKNELGEDEAIFEVIVQDRPSAPEGPLEVSDVTKDSCVLNWKPPKDDGGAEISNYVVEKRDTKTNTWVPVSAFVTGTSITVPKLTEGHEYEFRVMAENTFGRSDSLNTDEPVLAKDPFGTPGKPGRPEIVDTDNDHIDIKWDPPRDNGGSPVDHYDIERKDAKTGRWIKVNTSPVQGTAFSDTRVQKGHTYEYRVVAVNKAGPGQPSDSSAAATAKPMHEAPKFDLDLDGKEFRVKAGEPLVITIPFTASPQPDISWTKEGGKPLAGVETTDSQTKLVIPSTRRSDSGPVKIKAVNPYGEAEANIKITVIDKPGAPENITYPAVSRHTCTLNWDAPKDDGGAEIAGYKIEYQEVGSQIWDKVPGLISGTAYTVRGLEHGQQYRFRIRAENAVGLSDYCQGVPVVIKDPFDPPGAPSTPEITGYDTNQVSLAWNPPRDDGGSPILGYVVERFEKRGGGDWAPVKMPMVKGTECIVPGLHENETYQFRVRAVNAAGHGEPSNGSEPVTCRPYVEKPGAPDAPRVGKITKNSAELTWNRPLRDGGAPIDGYIVEKKKLGDNDWTRCNDKPVRDTAFEVKNLGEKEEYEFRVIAVNSAGEGEPSKPSDLVLIEEQPGRPIFDINNLKDITVRAGETIQIRIPYAGGNPKPIIDLFNGNSPIFENERTVVDVNPGEIVITTTGSKRSDAGPYKISATNKYGKDTCKLNVFVLDAPGKPTGPIRATDIQADAMTLSWRPPKDNGGDAITNYVVEKRTPGGDWVTVGHPVGTTLRVRNLDANTPYEFRVRAENQYGVGEPLETDDAIVAKNPFDTPGAPGQPEAVETSEEAITLQWTRPTSDGGAPIQGYVIEKREVGSTEWTKAAFGNILDTKHRVTGLTPKKTYEFRVAAYNAAGQGEYSVNSVPITADNAPTRPKINMGMLTRDILAYAGERAKILVPFAASPAPKVTFSKGENKISPTDPRVKVEYSDFLATLTIEKSELTDGGLYFVELENSQGSDSASIRLKVVDKPASPQHIRVEDIAPDCCTLYWMPPSSDGGSPITNYIVEKLDLRHSDGKWEKVSSFVRNLNYTVGGLIKDNRYRFRVRAETQYGVSEPCELADVVVAKYQFEVPNQPEAPTVRDKDSTWAELEWDPPRDGGSKIIGYQVQYRDTSSGRWINAKMDLSEQCHARVTGLRQNGEFEFRIIAKNAAGFSKPSPPSERCQLKSRFGPPGPPIHVGAKSIGRNHCTITWMAPLEDGGSKITGYNVEIREYGSTLWTVASDYNVREPEFTVDKLREFNDYEFRVVAINAAGKGIPSLPSGPIKIQESGGSRPQIVVKPEDTAQPYNRRAVFTCEAVGRPEPTARWLRNGRELPESSRYRFEASDGVYKFTIKEVWDIDAGEYTVEVSNPYGSDTATANLVVQAPPVIEKDVPNTILPSGDLVRLKIYFSGTAPFRHSLVLNREEIDMDHPTIRIVEFDDHILITIPALSVREAGRYEYTVSNDSGEATTGFWLNVTGLPEAPQGPLHISNIGPSTATLSWRPPVTDGGSKITSYVVEKRDLSKDEWVTVTSNVKDMNYIVTGLFENHEYEFRVSAQNENGIGAPLVSEHPIIARLPFDPPTSPLNLEIVQVGGDYVTLSWQRPLSDGGGRLRGYIVEKQEEEHDEWFRCNQNPSPPNNYNVPNLIDGRKYRYRVFAVNDAGLSDLAELDQTLFQASGSGEGPKIVSPLSDLNEEVGRCVTFECEISGSPRPEYRWFKGCKELVDTSKYTLINKGDKQVLIINDLTSDDADEYTCRATNSSGTRSTRANLRIKTKPRVFIPPKYHGGYEAQKGETIELKIPYKAYPQGEARWTKDGEKIENNSKFSITTDDKFATLRISNASREDYGEYRVVVENSVGSDSGTVNVTVADVPEPPRFPIIENILDEAVILSWKPPALDGGSLVTNYTIEKREAMGGSWSPCAKSRYTYTTIEGLRAGKQYEFRIIAENKHGQSKPCEPTAPVLIPGDERKRRRGYDVDEQGKIVRGKGTVSSNYDNYVFDIWKQYYPQPVEIKHDHVLDHYDIHEELGTGAFGVVHRVTERATGNNFAAKFVMTPHESDKETVRKEIQTMSVLRHPTLVNLHDAFEDDNEMVMIYEFMSGGELFEKVADEHNKMSEDEAVEYMRQVCKGLCHMHENNYVHLDLKPENIMFTTKRSNELKLIDFGLTAHLDPKQSVKVTTGTAEFAAPEVAEGKPVGYYTDMWSVGVLSYILLSGLSPFGGENDDETLRNVKSCDWNMDDSAFSGISEDGKDFIRKLLLADPNTRMTIHQALEHPWLTPGNAPGRDSQIPSSRYTKIRDSIKTKYDAWPEPLPPLGRISNYSSLRKHRPQEYSIRDAFWDRSEAQPRFIVKPYGTEVGEGQSANFYCRVIASSPPVVTWHKDDRELKQSVKYMKRYNGNDYGLTINRVKGDDKGEYTVRAKNSYGTKEEIVFLNVTRHSEPLKFEPLEPMKKAPSPPRVEEFKERRSAPFFTFHLRNRLIQKNHQCKLTCSLQGNPNPTIEWMKDGHPVDEDRVQVSFRSGVCSLEIFNARVDDAGTYTVTATNDLGVDVSECVLTVQTKGGEPIPRVSSFRPRRAYDTLSTGTDVERSHSYADMRRRSLIRDVSPDVRSAADDLKTKITNELPSFTAQLSDSETEVGGSAEFSAAVSGQPEPLIEWLHNGERISESDSRFRASYVAGKATLRISDAKKSDEGQYLCRASNSAGQEQTRATLTVKGDQPLLNGHAGQAVESELRVTKHLGGEIVNNGESVTFEARVQGTPEEVLWMRNGQELTNGDKTSISQDGETLSFTINSADASDAGHYQLEVRSKGTNLVSVASLVVVGEKADPPVTRLPSSVSAPLGGSTAFTIEFENVEGLTVQWFRGSEKIEKNERVKSVKTGNTFKLDIKNVEQDDDGIYVAKVVKEKKAIAKYAAALLLV.

Ig-like domains lie at 5-97 (PRFT…INLN) and 111-204 (PSFV…LALN). Disulfide bonds link cysteine 25/cysteine 81 and cysteine 132/cysteine 188. Disordered stretches follow at residues 204–381 (NFEE…PIVL), 473–639 (EEEL…TKLR), 658–732 (KKVK…DSMA), and 763–955 (EVKE…IDMR). Residues 220–238 (TASPRPSSRGPGSRPSSPK) show a composition bias toward low complexity. 2 stretches are compositionally biased toward basic and acidic residues: residues 242 to 259 (KSREGTPKRTLKPREGSP) and 279 to 291 (ESRRSSRTDKMEV). Low complexity-rich tracts occupy residues 319–340 (SPSTRKSPSRKSASPTPSRKGS) and 347–368 (SGTTGASASATSATSGGSASSD). The 90-residue stretch at 377–466 (PPIVLEASRS…GEGQSSAMVK (90 aa)) folds into the Ig-like 3 domain. The segment covering 504–513 (RVARRSKSKS) has biased composition (basic residues). Positions 514-523 (KSPAPQAKKS) are enriched in low complexity. Composition is skewed to basic and acidic residues over residues 529–540 (GRQEASEVEHKR) and 601–618 (KTDSPPKQDDMFSRDTLL). Residues 620–630 (KTTTSTKNESS) are compositionally biased toward low complexity. The Kelch 1 repeat unit spans residues 718 to 764 (VKSGAGGLEKSDSMASLKKLDLKKGKIDDNSDGAFKVQLKKVVKKEV). Basic and acidic residues-rich tracts occupy residues 763-813 (EVKE…DKPK), 837-850 (KEVEEKSTSEELKA), 885-897 (KAHDDTNELEGIK), and 917-955 (SESRRGSVFGELRRGSRAPRDSADNSRRDSIRRSSIDMR). Residues 980 to 1072 (PKIVEVPENV…DSADVKLLVT (93 aa)) enclose the Ig-like 4 domain. The tract at residues 1088-1118 (SQAGFQKDGEGGGAGGGGGEKKPMTEAERRQ) is disordered. Positions 1106-1118 (GEKKPMTEAERRQ) are enriched in basic and acidic residues. Ig-like domains are found at residues 1122–1213 (PGKK…AQLT), 1217–1306 (PPMK…SKVQ), and 1312–1398 (PRHT…AQLI). Cysteines 1150 and 1201 form a disulfide. Fibronectin type-III domains follow at residues 1598–1690 (PKGP…AKNP), 1696–1791 (KPKN…MKAK), 1891–1988 (PPKG…IKDP), 1994–2087 (KPGR…AKPK), 2189–2282 (PNGP…AKNP), 2288–2383 (KTGT…AKPR), 2483–2576 (PLGP…AKNP), and 2579–2675 (VPGK…AKPR). One copy of the Kelch 2 repeat lies at 2014-2058 (PPHKDGGAPIEEYIVEVRDPDTKEWKEVKRVPDTNASISGLKEGK). The 96-residue stretch at 2086 to 2181 (PKFIPAWLKH…GADEEKANLT (96 aa)) folds into the Ig-like 8 domain. The stretch at 2207-2253 (WKPPDDDGGEPIEYYEVEKLDTATGRWVPCAKVKDTKAHIDGLKKGQ) is one Kelch 3 repeat. A compositionally biased stretch (basic and acidic residues) spans 2266 to 2287 (GASDALSTDKDTKAKNPYDEPG). Residues 2266–2295 (GASDALSTDKDTKAKNPYDEPGKTGTPDVV) form a disordered region. A Kelch 4 repeat occupies 2502–2547 (KVPEDDGGAPIDHYEIEKMDLATGRWVPCGRSETTKTTVPNLQPGH). One can recognise an Ig-like 9 domain in the interval 2679-2763 (PRIHREDLSD…TNINGTDSVT (85 aa)). Fibronectin type-III domains are found at residues 2775–2868 (PKGP…AKNP) and 2874–2968 (RPGR…AKPR). The Kelch 5 repeat unit spans residues 2793-2839 (WKPPEDDGGEPIEFYEIEKMNTKDGIWVPCGRSGDTHFTVDSLNKGD). The tract at residues 2849 to 2901 (NSEGPSDPLETETDILAKNPFDRPDRPGRPEPTDWDSDHVDLKWDPPLSDGGA) is disordered. Basic and acidic residues predominate over residues 2868–2892 (PFDRPDRPGRPEPTDWDSDHVDLKW). The Ig-like 10 domain maps to 2972-3062 (PHIDRDALKN…GEDEATVKIN (91 aa)). Fibronectin type-III domains follow at residues 3070-3165 (PNGP…AKDP) and 3171-3265 (KTNA…AKAR). One copy of the Kelch 6 repeat lies at 3089–3134 (RAPDDDGGIPIENYVIEKYDTASGRWVPAAKVAGDKTTAVVDGLIP). Positions 3268–3358 (PPVIDRNSIQ…GTDTAEVKVT (91 aa)) constitute an Ig-like 11 domain. Fibronectin type-III domains are found at residues 3365–3459 (SPRG…AKDP) and 3465–3559 (KPGT…AKPR). The stretch at 3384-3430 (WKEPEDDGGAEISHYVIEKQDAATGRWTACGESKDTNFHVDDLTQGH) is one Kelch 7 repeat. One can recognise an Ig-like 12 domain in the interval 3563-3653 (PKINRDMFVA…GKDEHEVDVN (91 aa)). 6 consecutive Fibronectin type-III domains span residues 3661–3753 (PEGP…AKNP), 3759–3853 (APTD…AKPR), 3954–4047 (PEGP…AKNQ), 4053–4146 (PVDK…TKAR), 4246–4340 (PEGP…AKDP), and 4346–4440 (KPGR…TAKP). A Kelch 8 repeat occupies 3972 to 4018 (WKPPTDNGGTDVLHYIVEKMDTSRGTWQEVGTFPDCTAKVNKLVPGK). Kelch repeat units follow at residues 4265–4310 (KPPK…LTEG) and 4365–4410 (DPPR…RVQK). One can recognise an Ig-like 13 domain in the interval 4445-4531 (PKFDLDLDGK…GEAEANIKIT (87 aa)). Fibronectin type-III domains lie at 4538–4631 (APEN…IKDP), 4637–4733 (APST…CRPY), 4739–4834 (APDA…IEEQ), 4936–5028 (PTGP…AKNP), 5034–5129 (APGQ…ADNA), 5231–5326 (SPQH…VAKY), 5333–5427 (QPEA…LKSR), and 5430–5528 (PPGP…IQES). The Kelch 11 repeat unit spans residues 4557–4602 (DAPKDDGGAEIAGYKIEYQEVGSQIWDKVPGLISGTAYTVRGLEHG). One copy of the Kelch 12 repeat lies at 5287-5335 (LNYTVGGLIKDNRYRFRVRAETQYGVSEPCELADVVVAKYQFEVPNQPE). One can recognise an Ig-like 14 domain in the interval 5533–5621 (PQIVVKPEDT…GSDTATANLV (89 aa)). 2 consecutive Fibronectin type-III domains span residues 5723–5817 (PQGP…ARLP) and 5823–5919 (SPLN…ASGS). A Kelch 13 repeat occupies 5742-5787 (RPPVTDGGSKITSYVVEKRDLSKDEWVTVTSNVKDMNYIVTGLFEN). Ig-like domains lie at 5923–6011 (PKIV…ANLR) and 6016–6107 (PRVF…VNVT). The cysteines at positions 5944 and 5995 are disulfide-linked. Residues 6114 to 6207 (PPRFPIIENI…PTAPVLIPGD (94 aa)) enclose the Fibronectin type-III 31 domain. The region spanning 6261–6516 (YDIHEELGTG…IHQALEHPWL (256 aa)) is the Protein kinase domain. ATP-binding positions include 6267–6275 (LGTGAFGVV) and lysine 6290. Residue aspartate 6382 is the Proton acceptor of the active site. Residues 6517-6581 (TPGNAPGRDS…SIRDAFWDRS (65 aa)) form a C-terminal regulatory domain (CDR) region. Ig-like domains are found at residues 6585–6673 (PRFI…VFLN), 6696–6795 (PRVE…CVLT), 6863–6952 (PSFT…ATLT), 6958–7059 (PLLN…ASLV), and 7067–7149 (PPVT…KAIA).

The protein belongs to the protein kinase superfamily. CAMK Ser/Thr protein kinase family. May interact (via protein kinase and CRD domains) with mak-1 (via protein kinase domain). Mg(2+) is required as a cofactor. Post-translationally, phosphorylated by mak-1 on the protein kinase domain and/or CDR domain in vitro. In terms of tissue distribution, expressed in body wall, anal, vulval, and pharyngeal muscles (at protein level).

It is found in the cytoplasm. It localises to the myofibril. The protein localises to the sarcomere. The protein resides in the a band. It carries out the reaction L-seryl-[protein] + ATP = O-phospho-L-seryl-[protein] + ADP + H(+). The catalysed reaction is L-threonyl-[protein] + ATP = O-phospho-L-threonyl-[protein] + ADP + H(+). With respect to regulation, forces generated by the contraction/relaxation cycles of muscle activity separate the regulatory domain from the catalytic core, activating the enzyme. At rest, the kinase domain is in a closed conformation. The active site is occupied by the autoinhibitory region (CDR), which makes extensive contact with the catalytic site, blocking substrate binding. At low forces the regulatory tail will unravel reversibly and expose the active site to its substrates, potentially stabilized by binding of Ca/CALM. At high forces the kinase begins to unfold and the integrity of the active site is disrupted. Functionally, regulator of muscle contraction and relaxation. Senses mechanical strain that occurs during muscle activity by unfolding in clearly resolvable steps at differing forces. Plays a role in the organization of sarcomeres in body wall muscles. This Caenorhabditis elegans protein is Twitchin.